The following is a 634-amino-acid chain: MNETVANNKETRGFQSEVKQLLHLMIHSLYSNKEIFLRELISNASDAADKLRFQALSNPALYENDAELGVKLSFNEEHNTLTISDNGIGMSREEVISHLGTIAKSGTAEFFSKLSQEQSKDSQLIGQFGVGFYSAFIVADAVTVRTRAAGLSADQAVLWHSAGEGEYTVEDITKESRGTDIILHMREDGKEFLNEWRLRDVIGKYSDHIGIPVSIQTRVRDEEGKETEEVKWEQINKAQALWTRNKSDISDEEYQEFYKHVSHDFADPLLWSHNRVEGKNDYTSLLYIPSKAPWDMMNRDHKSGLKLYVQRVFIMDDAEQFMPSYLRFVRGLIDSNDLPLNVSREILQDNKVTQSLRGACTKRVLTMLERLAKNDTDKYQTFWKEFGLVMKEGPAEDYANREKVASLLRFASTEVDSAEQTVSLESYVERMKEGQDKIYYLTADSYAAAKNSPHLEQFKAKGLEVILMFDRIDEWLMNYLTEFDGKQFQSITKAGLDLSQFEDEQEKEKQKETEQEFQSVVERTKSYLGDRVKEVRTTFKLANTPAVVVTDDFEMGTQMAKLLAAAGQAVPEVKYIFEINPNHTLVKQMADETDEEAFGRWVEVLLGQAMLAERGSMEDPSQFLTAINSLLTKG.

The segment at 1–344 (MNETVANNKE…SNDLPLNVSR (344 aa)) is a; substrate-binding. A b region spans residues 345–561 (EILQDNKVTQ…DFEMGTQMAK (217 aa)). The interval 562–634 (LLAAAGQAVP…TAINSLLTKG (73 aa)) is c.

Belongs to the heat shock protein 90 family. Homodimer.

Its subcellular location is the cytoplasm. Its function is as follows. Molecular chaperone. Has ATPase activity. The chain is Chaperone protein HtpG from Vibrio vulnificus (strain CMCP6).